A 195-amino-acid chain; its full sequence is MKKITTINSGVIPLMRDNIDTDQIIPKQFLKNILKSGYGRNLFYDWRYKATSKEANPDFILNKPEYKQAQILVTGENFGCGSSREHAVWALKDYGFQVVIAGSYSDIFYMNSTKNGLLAIELPKKDRTILASIPAKEKIIVDLPRQQVRYEKYQFDFSINPLWKHKFINGLDDIAITMNYAKKIEAYEKEIPNFN.

This sequence belongs to the LeuD family. LeuD type 1 subfamily. As to quaternary structure, heterodimer of LeuC and LeuD.

The enzyme catalyses (2R,3S)-3-isopropylmalate = (2S)-2-isopropylmalate. Its pathway is amino-acid biosynthesis; L-leucine biosynthesis; L-leucine from 3-methyl-2-oxobutanoate: step 2/4. Functionally, catalyzes the isomerization between 2-isopropylmalate and 3-isopropylmalate, via the formation of 2-isopropylmaleate. This chain is 3-isopropylmalate dehydratase small subunit, found in Oenococcus oeni (strain ATCC BAA-331 / PSU-1).